We begin with the raw amino-acid sequence, 548 residues long: Probable malate:quinone oxidoreductase (548 aa).

Positions 521 to 548 (DKPQAADSTPKPQLKPQPVQKEVADIAL) are disordered. Over residues 530–541 (PKPQLKPQPVQK) the composition is skewed to low complexity.

Belongs to the MQO family. It depends on FAD as a cofactor.

It carries out the reaction (S)-malate + a quinone = a quinol + oxaloacetate. The protein operates within carbohydrate metabolism; tricarboxylic acid cycle; oxaloacetate from (S)-malate (quinone route): step 1/1. This Escherichia coli (strain UTI89 / UPEC) protein is Probable malate:quinone oxidoreductase.